We begin with the raw amino-acid sequence, 197 residues long: MSFTVHIVDDEESLRDSLGFLFASRGIATRTWAAGADLLAEWPLADCGCLILDVRMEGMSGPQLLDALQARPEGLVPPVIFLTGHADVPLAVQSLKAGAFDFVEKPFNDNHIVDIALSAIAAHEGRLAEAQAREAVAARRASLSAREAEVMALMLEGLMNKQIAERLGIAMRTVEVHRSRVLAKMGARNIADLARMT.

The 117-residue stretch at 4–120 (TVHIVDDEES…HIVDIALSAI (117 aa)) folds into the Response regulatory domain. A 4-aspartylphosphate modification is found at Asp-53. Residues 128–135 (AEAQAREA) are inter-domain linker. One can recognise an HTH luxR-type domain in the interval 136 to 197 (VAARRASLSA…RNIADLARMT (62 aa)). Positions 160–179 (NKQIAERLGIAMRTVEVHRS) form a DNA-binding region, H-T-H motif.

In terms of processing, phosphorylated by DctS.

The protein resides in the cytoplasm. Functionally, member of the two-component regulatory system DctS/DctR involved in the transport of C4-dicarboxylates. DctR functions as a transcriptional repressor of genes for C4-dicarboxylate transport. This Rhodobacter capsulatus (Rhodopseudomonas capsulata) protein is C4-dicarboxylate transport transcriptional regulatory protein DctR (dctR).